Consider the following 263-residue polypeptide: H-2 class II histocompatibility antigen, A-U beta chain (263 aa).

The N-terminal stretch at 1–27 is a signal peptide; sequence MALQIPSLLLLAAVVVLMVLSSPGTEG. Residues 28–120 form a beta-1 region; that stretch reads GDSERHFVVQ…TEVPTSLRRL (93 aa). The Extracellular portion of the chain corresponds to 28–224; that stretch reads GDSERHFVVQ…RAQSESARSK (197 aa). Intrachain disulfides connect Cys42–Cys104 and Cys143–Cys199. Asn46 is a glycosylation site (N-linked (GlcNAc...) asparagine). The tract at residues 121 to 214 is beta-2; it reads EQPNVVISLS…SLKSPITVEW (94 aa). The Ig-like C1-type domain maps to 123–211; it reads PNVVISLSRT…EHPSLKSPIT (89 aa). The interval 215-224 is connecting peptide; that stretch reads RAQSESARSK. The helical transmembrane segment at 225 to 245 threads the bilayer; that stretch reads MLSGIGGCVLGVIFLGLGLFI. Topologically, residues 246–263 are cytoplasmic; that stretch reads RHRSQKGPRGPPPAGLLQ.

This sequence belongs to the MHC class II family.

It is found in the membrane. This Mus musculus (Mouse) protein is H-2 class II histocompatibility antigen, A-U beta chain.